Reading from the N-terminus, the 240-residue chain is MPTLGVNIDHVATIRQARRTVEPDPIAAAVLAELGGADGITVHLREDRRHIQERDVRLLRQTVRTHLNLEMAATAEMVAIALELKPDYITLVPERREEITTEGGLDVNGQPERLQTVIDTLQQAGIPVSLFIDAEAKQIETAARLGAKFIELHTGRYAEAGSPQAQQRELETLAQGCARAIDLGVRVNAGHGLTYWNVRPVALLPGMEELNIGHTIVSRAVLVGMERAVREMKQAIQGTF.

N7 contributes to the 3-amino-2-oxopropyl phosphate binding site. 9–10 (DH) is a 1-deoxy-D-xylulose 5-phosphate binding site. R18 serves as a coordination point for 3-amino-2-oxopropyl phosphate. Catalysis depends on H43, which acts as the Proton acceptor. Residues R45 and H50 each coordinate 1-deoxy-D-xylulose 5-phosphate. E70 serves as the catalytic Proton acceptor. T100 serves as a coordination point for 1-deoxy-D-xylulose 5-phosphate. The active-site Proton donor is the H191. 3-amino-2-oxopropyl phosphate is bound by residues G192 and 213-214 (GH).

Belongs to the PNP synthase family. As to quaternary structure, homooctamer; tetramer of dimers.

Its subcellular location is the cytoplasm. It carries out the reaction 3-amino-2-oxopropyl phosphate + 1-deoxy-D-xylulose 5-phosphate = pyridoxine 5'-phosphate + phosphate + 2 H2O + H(+). Its pathway is cofactor biosynthesis; pyridoxine 5'-phosphate biosynthesis; pyridoxine 5'-phosphate from D-erythrose 4-phosphate: step 5/5. Functionally, catalyzes the complicated ring closure reaction between the two acyclic compounds 1-deoxy-D-xylulose-5-phosphate (DXP) and 3-amino-2-oxopropyl phosphate (1-amino-acetone-3-phosphate or AAP) to form pyridoxine 5'-phosphate (PNP) and inorganic phosphate. The chain is Pyridoxine 5'-phosphate synthase from Cyanothece sp. (strain PCC 7425 / ATCC 29141).